The chain runs to 130 residues: Transcription antitermination protein NusB (130 aa).

This sequence belongs to the NusB family.

Functionally, involved in transcription antitermination. Required for transcription of ribosomal RNA (rRNA) genes. Binds specifically to the boxA antiterminator sequence of the ribosomal RNA (rrn) operons. The polypeptide is Transcription antitermination protein NusB (Sulfurovum sp. (strain NBC37-1)).